Consider the following 199-residue polypeptide: Ribonuclease HII (199 aa).

In terms of domain architecture, RNase H type-2 spans 1–199; it reads MCVCGIDEAG…TYKNLVQGHI (199 aa). Positions 7, 8, and 97 each coordinate a divalent metal cation.

The protein belongs to the RNase HII family. Requires Mn(2+) as cofactor. The cofactor is Mg(2+).

The protein resides in the cytoplasm. The enzyme catalyses Endonucleolytic cleavage to 5'-phosphomonoester.. Functionally, endonuclease that specifically degrades the RNA of RNA-DNA hybrids. In Picrophilus torridus (strain ATCC 700027 / DSM 9790 / JCM 10055 / NBRC 100828 / KAW 2/3), this protein is Ribonuclease HII.